A 462-amino-acid polypeptide reads, in one-letter code: Cysteine--tRNA ligase (462 aa).

Cys29 serves as a coordination point for Zn(2+). Positions 31-41 (PTVYDHAHIGN) match the 'HIGH' region motif. The Zn(2+) site is built by Cys214, His239, and Glu243. The 'KMSKS' region signature appears at 272–276 (KMSKS). Lys275 provides a ligand contact to ATP.

Belongs to the class-I aminoacyl-tRNA synthetase family. In terms of assembly, monomer. It depends on Zn(2+) as a cofactor.

The protein resides in the cytoplasm. The catalysed reaction is tRNA(Cys) + L-cysteine + ATP = L-cysteinyl-tRNA(Cys) + AMP + diphosphate. The sequence is that of Cysteine--tRNA ligase from Xanthobacter autotrophicus (strain ATCC BAA-1158 / Py2).